Here is a 539-residue protein sequence, read N- to C-terminus: Fucosyltransferase 2 (539 aa).

Topologically, residues 1-5 (MRITE) are cytoplasmic. The helical; Signal-anchor for type II membrane protein transmembrane segment at 6–26 (ILALFMVLVPVSLVIVAMFGY) threads the bilayer. The Lumenal segment spans residues 27 to 539 (DQGNGFVQAS…SWGLKLVDNF (513 aa)). Residues Asn44, Asn231, and Asn482 are each glycosylated (N-linked (GlcNAc...) asparagine).

This sequence belongs to the glycosyltransferase 37 family. As to expression, expressed in roots, stems, leaves, flowers, siliques and seedlings.

It is found in the golgi apparatus. It localises to the golgi stack membrane. It functions in the pathway protein modification; protein glycosylation. May be involved in cell wall biosynthesis. May act as a fucosyltransferase. The sequence is that of Fucosyltransferase 2 (FUT2) from Arabidopsis thaliana (Mouse-ear cress).